Reading from the N-terminus, the 100-residue chain is MTPWFLYLIRTADNKLYTGITTDVERRYQQHQSGKGAKALRGKGELTLAFSAPVGDRSLALRAEYRVKQLTKRQKERLVAEGTGFAELLSSLQTPKIKSD.

The GIY-YIG domain occupies 2–77 (TPWFLYLIRT…KQLTKRQKER (76 aa)).

Belongs to the UPF0213 family.

This Shigella dysenteriae serotype 1 (strain Sd197) protein is UPF0213 protein YhbQ.